Consider the following 597-residue polypeptide: Formate--tetrahydrofolate ligase (597 aa).

84 to 91 is a binding site for ATP; that stretch reads TPLGEGKS.

The protein belongs to the formate--tetrahydrofolate ligase family.

It catalyses the reaction (6S)-5,6,7,8-tetrahydrofolate + formate + ATP = (6R)-10-formyltetrahydrofolate + ADP + phosphate. The protein operates within one-carbon metabolism; tetrahydrofolate interconversion. The polypeptide is Formate--tetrahydrofolate ligase (Dehalococcoides mccartyi (strain CBDB1)).